Here is a 525-residue protein sequence, read N- to C-terminus: Potassium voltage-gated channel subfamily A member 3 (525 aa).

The interval Met-1 to Pro-23 is disordered. The Cytoplasmic portion of the chain corresponds to Met-1–Arg-184. Residues Gly-185–Leu-203 form a helical membrane-spanning segment. Over Glu-204 to Pro-244 the chain is Extracellular. Residue Asn-229 is glycosylated (N-linked (GlcNAc...) asparagine). Residues Phe-245–Ala-266 form a helical membrane-spanning segment. Cys-267 carries S-palmitoyl cysteine lipidation. Residues Cys-267–Ile-277 lie on the Cytoplasmic side of the membrane. A helical membrane pass occupies residues Met-278–Ala-298. Over Glu-299–Ile-312 the chain is Extracellular. The helical; Voltage-sensor transmembrane segment at Leu-313–Ser-331 threads the bilayer. At Lys-332–Glu-347 the chain is on the cytoplasmic side. The chain crosses the membrane as a helical span at residues Leu-348 to Tyr-367. The Extracellular segment spans residues Phe-368–Lys-408. Residues Thr-394–Asp-399 carry the Selectivity filter motif. The helical transmembrane segment at Ile-409–Ser-431 threads the bilayer. Over Asn-432–Val-525 the chain is Cytoplasmic. The tract at residues Asn-432 to Val-525 is interaction with KCNE4. A Phosphotyrosine modification is found at Tyr-449. Phosphoserine; by PKA is present on Ser-470. The PDZ-binding motif lies at Thr-523–Val-525.

This sequence belongs to the potassium channel family. A (Shaker) (TC 1.A.1.2) subfamily. Kv1.3/KCNA3 sub-subfamily. As to quaternary structure, homotetramer. Forms heterooligomers with KCNE4 which inhibits KCNA3 activity by impairing localization to the cell membrane. The stoichiometry of KCNA3 and KCNE4 in the heterooligomers are 4:1, 4:2, 4:3 or 4:4 respectively. Increasing the number of KCNE4 subunits steadily slows the activation KCNA3 and decreases its abundance at the cell membrane. However, a single subunit of KCNE4 is sufficient for the cooperative enhancement of the inactivating function of the channel. Interacts with SEC24D; this interaction is reduced in the presence of KCNE4. Interacts with DLG1, DLG2 and DLG4 via their PDZ domains. In terms of processing, phosphorylation on Tyr-449 inhibits its channel activity. Post-translationally, N-glycosylation promotes the cell surface expression.

It is found in the cell membrane. The enzyme catalyses K(+)(in) = K(+)(out). Activity is up-regulated by JAK2. Its function is as follows. Mediates the voltage-dependent potassium ion permeability of excitable membranes. Assuming opened or closed conformations in response to the voltage difference across the membrane, the protein forms a potassium-selective channel through which potassium ions may pass in accordance with their electrochemical gradient. This is Potassium voltage-gated channel subfamily A member 3 (Kcna3) from Rattus norvegicus (Rat).